We begin with the raw amino-acid sequence, 152 residues long: UPF0225 protein YchJ (152 aa).

Belongs to the UPF0225 family.

This is UPF0225 protein YchJ from Shigella dysenteriae serotype 1 (strain Sd197).